Here is a 387-residue protein sequence, read N- to C-terminus: Protein kinase ORF16 (387 aa).

A Protein kinase domain is found at 82–381 (KKILSRVGPE…VTLMTELSLL (300 aa)). Lys-122 serves as a coordination point for ATP. Asp-226 functions as the Proton acceptor in the catalytic mechanism.

This sequence belongs to the protein kinase superfamily. Ser/Thr protein kinase family.

The catalysed reaction is L-seryl-[protein] + ATP = O-phospho-L-seryl-[protein] + ADP + H(+). The enzyme catalyses L-threonyl-[protein] + ATP = O-phospho-L-threonyl-[protein] + ADP + H(+). This Ictalurid herpesvirus 1 (strain Auburn) (IcHV-1) protein is Protein kinase ORF16 (ORF16).